Consider the following 137-residue polypeptide: Large ribosomal subunit protein eL28 (137 aa).

Ser-2 carries the post-translational modification N-acetylserine. Glycyl lysine isopeptide (Lys-Gly) (interchain with G-Cter in SUMO2) cross-links involve residues Lys-58 and Lys-65. Ser-115 carries the phosphoserine modification.

The protein belongs to the eukaryotic ribosomal protein eL28 family. In terms of assembly, component of the large ribosomal subunit.

It localises to the cytoplasm. Component of the large ribosomal subunit. The ribosome is a large ribonucleoprotein complex responsible for the synthesis of proteins in the cell. The polypeptide is Large ribosomal subunit protein eL28 (Rpl28) (Mus musculus (Mouse)).